The primary structure comprises 437 residues: Protein farnesyltransferase subunit beta (437 aa).

PFTB repeat units follow at residues 123–164 (ATDV…CIIG), 174–215 (REKL…SLTN), 222–263 (FEGT…VILK), 270–312 (LKSL…PLLH), and 332–374 (QQAL…SIAQ). (2E,6E)-farnesyl diphosphate-binding positions include 248 to 251 (HGGY) and 291 to 294 (RCNK). Residues aspartate 297 and cysteine 299 each coordinate Zn(2+). 300 to 303 (YSFW) lines the (2E,6E)-farnesyl diphosphate pocket. Histidine 362 contacts Zn(2+). The residue at position 436 (threonine 436) is a Phosphothreonine.

It belongs to the protein prenyltransferase subunit beta family. Heterodimer of FNTA and FNTB. The cofactor is Zn(2+).

The enzyme catalyses L-cysteinyl-[protein] + (2E,6E)-farnesyl diphosphate = S-(2E,6E)-farnesyl-L-cysteinyl-[protein] + diphosphate. Its function is as follows. Essential subunit of the farnesyltransferase complex. Catalyzes the transfer of a farnesyl moiety from farnesyl diphosphate to a cysteine at the fourth position from the C-terminus of several proteins having the C-terminal sequence Cys-aliphatic-aliphatic-X. This is Protein farnesyltransferase subunit beta (FNTB) from Homo sapiens (Human).